The primary structure comprises 669 residues: DNA ligase (669 aa).

Residues 33 to 37 (DAEYD), 82 to 83 (SL), and glutamate 114 each bind NAD(+). The N6-AMP-lysine intermediate role is filled by lysine 116. NAD(+) is bound by residues arginine 137, glutamate 174, lysine 291, and lysine 315. 4 residues coordinate Zn(2+): cysteine 409, cysteine 412, cysteine 427, and cysteine 433. The 77-residue stretch at 593–669 (EIPQPLAGKV…QTEQDLLALL (77 aa)) folds into the BRCT domain.

This sequence belongs to the NAD-dependent DNA ligase family. LigA subfamily. Mg(2+) is required as a cofactor. Requires Mn(2+) as cofactor.

The catalysed reaction is NAD(+) + (deoxyribonucleotide)n-3'-hydroxyl + 5'-phospho-(deoxyribonucleotide)m = (deoxyribonucleotide)n+m + AMP + beta-nicotinamide D-nucleotide.. Functionally, DNA ligase that catalyzes the formation of phosphodiester linkages between 5'-phosphoryl and 3'-hydroxyl groups in double-stranded DNA using NAD as a coenzyme and as the energy source for the reaction. It is essential for DNA replication and repair of damaged DNA. In Vibrio vulnificus (strain YJ016), this protein is DNA ligase.